Consider the following 314-residue polypeptide: Homoserine O-acetyltransferase (314 aa).

Residue Cys142 is the Acyl-thioester intermediate of the active site. Substrate contacts are provided by Lys163 and Ser192. His235 functions as the Proton acceptor in the catalytic mechanism. The active site involves Glu237. Arg249 contributes to the substrate binding site.

It belongs to the MetA family.

It localises to the cytoplasm. It carries out the reaction L-homoserine + acetyl-CoA = O-acetyl-L-homoserine + CoA. It functions in the pathway amino-acid biosynthesis; L-methionine biosynthesis via de novo pathway; O-acetyl-L-homoserine from L-homoserine: step 1/1. Transfers an acetyl group from acetyl-CoA to L-homoserine, forming acetyl-L-homoserine. This Streptococcus mutans serotype c (strain ATCC 700610 / UA159) protein is Homoserine O-acetyltransferase.